Reading from the N-terminus, the 1203-residue chain is Probable phospholipid-transporting ATPase 11 (1203 aa).

Residues 1-71 (MTKCRRRRLH…STKYTLASFI (71 aa)) are Cytoplasmic-facing. The chain crosses the membrane as a helical span at residues 72–93 (PKSLFEQFRRVANFYFLVTGVL). Over 94–97 (SLTA) the chain is Extracellular. A helical transmembrane segment spans residues 98 to 120 (LSPYSPISALLPLTFVIAASMVK). Residues 121–303 (EAIEDWGRKK…SRIERKMDKI (183 aa)) are Cytoplasmic-facing. The helical transmembrane segment at 304–325 (IYLMFGVVFLMSFIGSIVFGIE) threads the bilayer. Residues 326–363 (TREDRVRNGGRTERWYLRPDNADIFFDPDRAPMAAVYH) are Extracellular-facing. Residues 364 to 381 (FFTAVMLYSYFIPISLYV) traverse the membrane as a helical segment. Topologically, residues 382–921 (SIEIVKVLQS…HGHWCYSRIS (540 aa)) are cytoplasmic. Asp-429 (4-aspartylphosphate intermediate) is an active-site residue. Mg(2+) contacts are provided by Asp-866 and Asp-870. The helical transmembrane segment at 922-941 (SMICYFFYKNITFGVTVFLY) threads the bilayer. Over 942–955 (EAYTSFSAQPAYND) the chain is Extracellular. Residues 956–975 (WFLSLFNVFFSSLPVIALGV) traverse the membrane as a helical segment. At 976–1005 (FDQDVSARYCYKFPLLYQEGVQNLLFSWKR) the chain is on the cytoplasmic side. Residues 1006 to 1028 (IIGWMFNGVFTALAIFFLCKESL) traverse the membrane as a helical segment. The Extracellular portion of the chain corresponds to 1029 to 1041 (KHQLYNPNGKTAG). Residues 1042–1064 (REILGGTMYTCVVWVVNLQMALA) form a helical membrane-spanning segment. Residues 1065–1070 (ISYFTW) lie on the Cytoplasmic side of the membrane. A helical transmembrane segment spans residues 1071–1091 (LQHIVIWGSVAFWYIFLMIYG). Residues 1092–1108 (AITPSFSTDAYKVFIEA) are Extracellular-facing. The helical transmembrane segment at 1109–1133 (LAPAPSYWLTTLFVMFFALIPFFVF) threads the bilayer. Over 1134-1203 (KSVQMRFFPG…DQLNKNFIAF (70 aa)) the chain is Cytoplasmic.

The protein belongs to the cation transport ATPase (P-type) (TC 3.A.3) family. Type IV subfamily.

Its subcellular location is the membrane. The enzyme catalyses ATP + H2O + phospholipidSide 1 = ADP + phosphate + phospholipidSide 2.. Involved in transport of phospholipids. The protein is Probable phospholipid-transporting ATPase 11 of Arabidopsis thaliana (Mouse-ear cress).